Here is a 277-residue protein sequence, read N- to C-terminus: Glutamate racemase (277 aa).

Substrate-binding positions include 25-26 (DS) and 57-58 (YG). The active-site Proton donor/acceptor is Cys89. 90 to 91 (NT) is a substrate binding site. Catalysis depends on Cys204, which acts as the Proton donor/acceptor. 205-206 (TH) is a substrate binding site.

The protein belongs to the aspartate/glutamate racemases family.

The catalysed reaction is L-glutamate = D-glutamate. Its pathway is cell wall biogenesis; peptidoglycan biosynthesis. Provides the (R)-glutamate required for cell wall biosynthesis. In Brucella ovis (strain ATCC 25840 / 63/290 / NCTC 10512), this protein is Glutamate racemase.